Here is a 742-residue protein sequence, read N- to C-terminus: MDKDNSVQEKGLFLSSWKLDNSKMAELFMECEEEELEPWQQKVEESQSKDDDDELIFVGEISSSKPAISNILNRCSPGSSSKGLKNGSFNPAISNIFKPTSQHYRNPSSNALVALPSFHPALKSSESSDGQTVSKLDFTKTSPQEDSGACSVSQSDSTQDIPSSNILQPRTGVDQTLGLKHPSTSKVNSVNPKKPKTSASISETRPCSSSSSQTAPSGASSQTVLSNVNTSSVQSAPGSSSLRSCPKCNVKFRLLDPLKCHMKRCCPDMINKFLETLKSENSKAVSKATTDSDKEKLIMLVSDFYYGRHEGTIEESQKTHTTFKCFSCTKVLKNNIRFMNHMKHHLELEKQNNETWESHTTCQHCYRQYPNPFQLQCHIESTHTPHDFSTICKICELSFETEHMLLQHMKDTHKPGEMPYICQVCQFRSSIFSDVETHFRSSHENTKNLLCPFCLKVSRMATPYMNHYMRHQKKGIYRCPKCRLQFLTSKEKTEHKLEHRTFIKPKELEGLPPGTKVIIRASLGSSQSRASSPPSSTIPSTSLQLSVPKSKSTTTKNNSKVSANKATTTSPQTVATTTGKPSASKPGTGTTKSKAKPSYKQKRQRTRKNKFSIDLKNLRCHQGSHMCIECRSKIKDFSSHFSTHINCDFCKYTTNCNKAFTNHMSSHNDHPSKQLYIFKKQSRARRGITLVCLKCDFLADTSGLDRMAKHLNQRKTHTCQVVIENVTERAVTSESASDGLFK.

Glycyl lysine isopeptide (Lys-Gly) (interchain with G-Cter in SUMO2) cross-links involve residues Lys10, Lys23, Lys42, Lys65, Lys85, Lys123, and Lys135. Residues 138–168 are compositionally biased toward polar residues; that stretch reads FTKTSPQEDSGACSVSQSDSTQDIPSSNILQ. The segment at 138–243 is disordered; the sequence is FTKTSPQEDS…QSAPGSSSLR (106 aa). Residues Lys180, Lys186, and Lys193 each participate in a glycyl lysine isopeptide (Lys-Gly) (interchain with G-Cter in SUMO2) cross-link. The span at 182–191 shows a compositional bias: polar residues; that stretch reads PSTSKVNSVN. Residues 200–222 show a composition bias toward low complexity; the sequence is SISETRPCSSSSSQTAPSGASSQ. The span at 223-243 shows a compositional bias: polar residues; it reads TVLSNVNTSSVQSAPGSSSLR. 5 consecutive C2H2-type zinc fingers follow at residues 323-345, 360-383, 390-413, 420-443, and 477-499; these read FKCF…MKHH, TTCQ…ESTH, TICK…KDTH, YICQ…RSSH, and YRCP…KLEH. The segment covering 523-578 has biased composition (low complexity); the sequence is LGSSQSRASSPPSSTIPSTSLQLSVPKSKSTTTKNNSKVSANKATTTSPQTVATTT. The segment at 523–608 is disordered; sequence LGSSQSRASS…YKQKRQRTRK (86 aa). Residues 579-592 show a composition bias toward polar residues; sequence GKPSASKPGTGTTK. Lys580 is covalently cross-linked (Glycyl lysine isopeptide (Lys-Gly) (interchain with G-Cter in SUMO2)). Residues 593–608 show a composition bias toward basic residues; the sequence is SKAKPSYKQKRQRTRK.

Its subcellular location is the nucleus. Its function is as follows. May function as a transcription factor. This is Zinc finger protein 280C (Znf280c) from Mus musculus (Mouse).